The following is a 950-amino-acid chain: UvrABC system protein A (950 aa).

An ATP-binding site is contributed by 42–49 (GLSGSGKS). The C4-type zinc-finger motif lies at 262–289 (CPVCSYSLPELEPRLFSFNNPMGSCPTC). ABC transporter domains are found at residues 319–596 (WDKR…EKSV) and 616–945 (VNPG…KYLK). 649 to 656 (GVSGSGKS) serves as a coordination point for ATP. The C4-type zinc finger occupies 748-774 (CEACQGDGVIKVEMHFLPDVYVPCEVC).

This sequence belongs to the ABC transporter superfamily. UvrA family. In terms of assembly, forms a heterotetramer with UvrB during the search for lesions.

It localises to the cytoplasm. Functionally, the UvrABC repair system catalyzes the recognition and processing of DNA lesions. UvrA is an ATPase and a DNA-binding protein. A damage recognition complex composed of 2 UvrA and 2 UvrB subunits scans DNA for abnormalities. When the presence of a lesion has been verified by UvrB, the UvrA molecules dissociate. The sequence is that of UvrABC system protein A from Neisseria gonorrhoeae.